We begin with the raw amino-acid sequence, 134 residues long: Phosphoribosyl-AMP cyclohydrolase (134 aa).

Mg(2+) is bound at residue D78. C79 lines the Zn(2+) pocket. Mg(2+) is bound by residues D80 and D82. Zn(2+) is bound by residues C96 and C103.

Belongs to the PRA-CH family. Homodimer. Mg(2+) is required as a cofactor. It depends on Zn(2+) as a cofactor.

The protein resides in the cytoplasm. The catalysed reaction is 1-(5-phospho-beta-D-ribosyl)-5'-AMP + H2O = 1-(5-phospho-beta-D-ribosyl)-5-[(5-phospho-beta-D-ribosylamino)methylideneamino]imidazole-4-carboxamide. It functions in the pathway amino-acid biosynthesis; L-histidine biosynthesis; L-histidine from 5-phospho-alpha-D-ribose 1-diphosphate: step 3/9. Catalyzes the hydrolysis of the adenine ring of phosphoribosyl-AMP. The chain is Phosphoribosyl-AMP cyclohydrolase from Cupriavidus necator (strain ATCC 17699 / DSM 428 / KCTC 22496 / NCIMB 10442 / H16 / Stanier 337) (Ralstonia eutropha).